A 61-amino-acid polypeptide reads, in one-letter code: Metallothionein-1C (61 aa).

The beta stretch occupies residues 1–29 (MDPNCSCSTGGSCSCAGSCTCKACRCTSC). A divalent metal cation contacts are provided by Cys5, Cys7, Cys13, Cys15, Cys19, Cys21, Cys24, Cys26, Cys29, Cys33, Cys34, Cys36, Cys37, Cys41, Cys44, Cys48, Cys50, Cys57, Cys59, and Cys60. Positions 30–61 (KKSCCSCCPAGCARCAQGCICKGASDKCSCCA) are alpha.

It belongs to the metallothionein superfamily. Type 1 family. In terms of assembly, monomer.

In terms of biological role, metallothioneins have a high content of cysteine residues that bind various heavy metals; these proteins are transcriptionally regulated by both heavy metals and glucocorticoids. The chain is Metallothionein-1C (MT1C) from Sus scrofa (Pig).